Here is a 223-residue protein sequence, read N- to C-terminus: MLGLGRVFSSAVRPRTLIRAPINKRSFLWYSTEAAKEEKPAEEKVAETENVDVKELQSKLSELKSKYEAKDKEVAELKGSIRQSLADYRNLENRMKRDMEQTRAFAVQKLTKDLLDSVDNLERALSIVPEEKRNNRESNKDLVDLYEGLAMTESNLMKTLGKYGLVRYDGIGEDFDPNIHEAVFQIPVEGKKPNTVFHCESKGFQLNGRVIRPAKVGVVKGDD.

Belongs to the GrpE family. Component of the PAM complex, at least composed of mtHsp70, mge1, tim44, pam16, pam17 and pam18.

Its subcellular location is the mitochondrion matrix. Essential component of the PAM complex, a complex required for the translocation of transit peptide-containing proteins from the inner membrane into the mitochondrial matrix in an ATP-dependent manner. Seems to control the nucleotide-dependent binding of ssc1 to substrate proteins. The polypeptide is GrpE protein homolog, mitochondrial (mge1) (Schizosaccharomyces pombe (strain 972 / ATCC 24843) (Fission yeast)).